The primary structure comprises 161 residues: MRHNKKFNHLGRTNTHRDAMLSNMACSLIKHKRIFTTTAKAKALRKYVEPLITKSKEDTTHSRRVVFSNLQDKFAVTELFKEIAQKIGDRPGGYTRIIKTGNRLGDNAAMCFIELVDYNENMLKDTAAKKAPKTRRSRKKATASVAEAPTAEAASEEKAAE.

Residues Thr-126 to Glu-161 form a disordered region. Residues Lys-130–Ala-141 are compositionally biased toward basic residues. Positions Thr-142–Ala-153 are enriched in low complexity.

This sequence belongs to the bacterial ribosomal protein bL17 family. As to quaternary structure, part of the 50S ribosomal subunit. Contacts protein L32.

The polypeptide is Large ribosomal subunit protein bL17 (Parabacteroides distasonis (strain ATCC 8503 / DSM 20701 / CIP 104284 / JCM 5825 / NCTC 11152)).